Consider the following 170-residue polypeptide: Myosin regulatory light chain 11 (170 aa).

Ala2 carries the post-translational modification N,N,N-trimethylalanine. 2 positions are modified to phosphoserine: Ser16 and Ser17. Phosphothreonine is present on residues Thr26 and Thr36. The 36-residue stretch at 26-61 folds into the EF-hand 1 domain; the sequence is TQIQEFKEAFTVIDQNRDGIIDKEDLRDTFAAMGRL. 4 residues coordinate Ca(2+): Asp39, Asn41, Asp43, and Asp50. Position 76 is a phosphoserine (Ser76). 2 consecutive EF-hand domains span residues 96–131 and 132–167; these read DPEDVITGAFKVLDPEGKGTIKKQFLEELLTTQCDR and FSQEEIKNMWAAFPPDVGGNVDYKNICYVITHGDAK. Thr102 is subject to Phosphothreonine.

As to quaternary structure, myosin is a hexamer of 2 heavy chains and 4 light chains. Post-translationally, n,N,N-trimethylalanine found in this myosin light chain would not have been detected in the N-terminal tryptic peptide in PubMed:863872 and PubMed:352892 because it would remain trimethylated and ninhydrin negative after hydrolysis.

Its function is as follows. Myosin regulatory subunit that plays an essential role to maintain muscle integrity during early development. Plays a role in muscle contraction. The sequence is that of Myosin regulatory light chain 11 (MYL11) from Oryctolagus cuniculus (Rabbit).